The primary structure comprises 79 residues: MANTKSALKQIRKNNLKRLQNKFVLKTTKTAIKKLKLESKKNLNAFPKISSLIDKLAKKKIIHKNKSNRIKSKLVKLIN.

This sequence belongs to the bacterial ribosomal protein bS20 family.

Functionally, binds directly to 16S ribosomal RNA. The sequence is that of Small ribosomal subunit protein bS20 from Karelsulcia muelleri (strain GWSS) (Sulcia muelleri).